The sequence spans 747 residues: Protein neuralized (747 aa).

One can recognise an NHR 1 domain in the interval 97 to 251 (PLQFHTVHGD…NCTGIEFLDA (155 aa)). Low complexity predominate over residues 280–292 (LPQQQQQLPQQQL). The disordered stretch occupies residues 280–309 (LPQQQQQLPQQQLTAHHPLQQSRRSLPGGT). Residues 359–514 (PVPFHITKGR…STQSLRMFRQ (156 aa)) form the NHR 2 domain. The RING-type zinc-finger motif lies at 694 to 735 (CTICYENPIDSVLYMCGHMCMCYDCAIEQWRGVGGGQCPLCR).

It is found in the nucleus. Involved in neurogenesis. Interacts with other neurogenic proteins in the specification of the neuroblast versus epidermoblast cell fate. In Drosophila virilis (Fruit fly), this protein is Protein neuralized (neur).